The primary structure comprises 459 residues: ATP synthase subunit beta (459 aa).

An ATP-binding site is contributed by 149–156; sequence GGAGVGKT.

The protein belongs to the ATPase alpha/beta chains family. As to quaternary structure, F-type ATPases have 2 components, CF(1) - the catalytic core - and CF(0) - the membrane proton channel. CF(1) has five subunits: alpha(3), beta(3), gamma(1), delta(1), epsilon(1). CF(0) has three main subunits: a(1), b(2) and c(9-12). The alpha and beta chains form an alternating ring which encloses part of the gamma chain. CF(1) is attached to CF(0) by a central stalk formed by the gamma and epsilon chains, while a peripheral stalk is formed by the delta and b chains.

It is found in the cell inner membrane. It carries out the reaction ATP + H2O + 4 H(+)(in) = ADP + phosphate + 5 H(+)(out). In terms of biological role, produces ATP from ADP in the presence of a proton gradient across the membrane. The catalytic sites are hosted primarily by the beta subunits. This is ATP synthase subunit beta from Pseudomonas syringae pv. tomato (strain ATCC BAA-871 / DC3000).